The primary structure comprises 316 residues: MTTQLEQLRKLTTVVADTGDIEAIAKYTPEDATTNPSLILKAAQIAEYAPLIDASIEYAKAQSNDKAQQVQDTCDMLAVSIGKEILKVVPGRISTEIDACLSYDTEGSIAKARQLIKMYNEAGITNDRILIKLASTWEGIRAAEVLEKEGINCNLTLLFSFAQARACAEAGVFLISPFVGRIMDWYKAKEGRDFEPSEDPGVISVAGIYNYYKEHGYKTVVMGASFRNIGEILELAGCDRLTISPNLLQELEDATGEVVEKLIDTNGNKECPAAMTHAEFLWDHNQDPMAVEKLAEGIRNFAVDQGKLEEMIAAKL.

Lys-132 serves as the catalytic Schiff-base intermediate with substrate.

Belongs to the transaldolase family. Type 1 subfamily. Homodimer.

Its subcellular location is the cytoplasm. The catalysed reaction is D-sedoheptulose 7-phosphate + D-glyceraldehyde 3-phosphate = D-erythrose 4-phosphate + beta-D-fructose 6-phosphate. The protein operates within carbohydrate degradation; pentose phosphate pathway; D-glyceraldehyde 3-phosphate and beta-D-fructose 6-phosphate from D-ribose 5-phosphate and D-xylulose 5-phosphate (non-oxidative stage): step 2/3. Transaldolase is important for the balance of metabolites in the pentose-phosphate pathway. This is Transaldolase from Aliivibrio salmonicida (strain LFI1238) (Vibrio salmonicida (strain LFI1238)).